The chain runs to 303 residues: Nod factor export ATP-binding protein I (303 aa).

Residues 5–235 (LQMRNVRKLY…EIGCDVVEVY (231 aa)) enclose the ABC transporter domain. Residue 37 to 44 (GPNGAGKT) coordinates ATP.

This sequence belongs to the ABC transporter superfamily. Lipooligosaccharide exporter (TC 3.A.1.102) family. The complex is composed of two ATP-binding proteins (NodI) and two transmembrane proteins (NodJ).

The protein localises to the cell inner membrane. Its function is as follows. Part of the ABC transporter complex NodIJ involved in the export of the nodulation factors (Nod factors), the bacterial signal molecules that induce symbiosis and subsequent nodulation induction. Nod factors are LCO (lipo-chitin oligosaccharide), a modified beta-1,4-linked N-acetylglucosamine oligosaccharide. This subunit is responsible for energy coupling to the transport system. The polypeptide is Nod factor export ATP-binding protein I (Cupriavidus metallidurans (strain ATCC 43123 / DSM 2839 / NBRC 102507 / CH34) (Ralstonia metallidurans)).